A 27-amino-acid chain; its full sequence is Phospholipase A2 1 (27 aa).

This sequence belongs to the phospholipase A2 family. Group I subfamily. It depends on Ca(2+) as a cofactor. In terms of tissue distribution, expressed by the venom gland.

It is found in the secreted. The catalysed reaction is a 1,2-diacyl-sn-glycero-3-phosphocholine + H2O = a 1-acyl-sn-glycero-3-phosphocholine + a fatty acid + H(+). Its function is as follows. Snake venom phospholipase A2 (PLA2) that inhibits neuromuscular transmission by blocking acetylcholine release from the nerve termini. PLA2 catalyzes the calcium-dependent hydrolysis of the 2-acyl groups in 3-sn-phosphoglycerides. The protein is Phospholipase A2 1 of Micrurus nigrocinctus (Central American coral snake).